The primary structure comprises 236 residues: Phosphoribosylaminoimidazole-succinocarboxamide synthase (236 aa).

Belongs to the SAICAR synthetase family.

It catalyses the reaction 5-amino-1-(5-phospho-D-ribosyl)imidazole-4-carboxylate + L-aspartate + ATP = (2S)-2-[5-amino-1-(5-phospho-beta-D-ribosyl)imidazole-4-carboxamido]succinate + ADP + phosphate + 2 H(+). The protein operates within purine metabolism; IMP biosynthesis via de novo pathway; 5-amino-1-(5-phospho-D-ribosyl)imidazole-4-carboxamide from 5-amino-1-(5-phospho-D-ribosyl)imidazole-4-carboxylate: step 1/2. The polypeptide is Phosphoribosylaminoimidazole-succinocarboxamide synthase (Streptococcus equi subsp. zooepidemicus (strain H70)).